A 40-amino-acid polypeptide reads, in one-letter code: Large ribosomal subunit protein bL36B (40 aa).

This sequence belongs to the bacterial ribosomal protein bL36 family.

In Streptomyces coelicolor (strain ATCC BAA-471 / A3(2) / M145), this protein is Large ribosomal subunit protein bL36B.